A 387-amino-acid polypeptide reads, in one-letter code: Protein phosphatase 2C 50 (387 aa).

Residues 60–377 form the PPM-type phosphatase domain; that stretch reads VWGCASTRGR…DNITVIVVDL (318 aa). Residues Asp-118 and Gly-119 each contribute to the Mn(2+) site. A Modulates binding affinity to PYR/PYL/RCAR abscisic acid intracellular receptors motif is present at residues 264 to 268; that stretch reads VSGIL. Residues Asp-306 and Asp-368 each contribute to the Mn(2+) site.

Belongs to the PP2C family. In terms of assembly, interacts with PYL3, PYL5, PYL9 and PYL10. Binding to PYL3, PYL5, PYL9 and PYL10 is dependent on the presence of abscisic acid (ABA). Interacts with SAPK10. It depends on Mg(2+) as a cofactor. The cofactor is Mn(2+).

It catalyses the reaction O-phospho-L-seryl-[protein] + H2O = L-seryl-[protein] + phosphate. The enzyme catalyses O-phospho-L-threonyl-[protein] + H2O = L-threonyl-[protein] + phosphate. Protein phosphatase involved in abscisic acid (ABA) signaling. Together with PYL3 and SAPK10, may form an ABA signaling module involved in stress response. In Oryza sativa subsp. japonica (Rice), this protein is Protein phosphatase 2C 50.